The following is a 240-amino-acid chain: Large ribosomal subunit protein uL2 (240 aa).

Positions M1–G11 are enriched in polar residues. Disordered regions lie at residues M1–V28 and G206–K240. Composition is skewed to basic residues over residues G13–V28 and S224–K240.

It belongs to the universal ribosomal protein uL2 family. Part of the 50S ribosomal subunit. Forms a bridge to the 30S subunit in the 70S ribosome.

In terms of biological role, one of the primary rRNA binding proteins. Required for association of the 30S and 50S subunits to form the 70S ribosome, for tRNA binding and peptide bond formation. It has been suggested to have peptidyltransferase activity; this is somewhat controversial. Makes several contacts with the 16S rRNA in the 70S ribosome. The polypeptide is Large ribosomal subunit protein uL2 (Methanococcus maripaludis (strain C7 / ATCC BAA-1331)).